Here is a 165-residue protein sequence, read N- to C-terminus: 3-isopropylmalate dehydratase small subunit (165 aa).

It belongs to the LeuD family. LeuD type 2 subfamily. Heterodimer of LeuC and LeuD.

The enzyme catalyses (2R,3S)-3-isopropylmalate = (2S)-2-isopropylmalate. It participates in amino-acid biosynthesis; L-leucine biosynthesis; L-leucine from 3-methyl-2-oxobutanoate: step 2/4. Its function is as follows. Catalyzes the isomerization between 2-isopropylmalate and 3-isopropylmalate, via the formation of 2-isopropylmaleate. In Saccharolobus islandicus (strain Y.G.57.14 / Yellowstone #1) (Sulfolobus islandicus), this protein is 3-isopropylmalate dehydratase small subunit.